The chain runs to 459 residues: Ribulose bisphosphate carboxylase (459 aa).

A substrate-binding site is contributed by Asn111. Lys166 serves as the catalytic Proton acceptor. Residue Lys168 participates in substrate binding. Mg(2+) is bound by residues Lys191, Asp193, and Glu194. Lys191 is subject to N6-carboxylysine. His287 acts as the Proton acceptor in catalysis. Substrate-binding residues include Arg288, His321, and Ser368.

The protein belongs to the RuBisCO large chain family. Type II subfamily. In terms of assembly, homodimer. It depends on Mg(2+) as a cofactor.

The catalysed reaction is 2 (2R)-3-phosphoglycerate + 2 H(+) = D-ribulose 1,5-bisphosphate + CO2 + H2O. The enzyme catalyses D-ribulose 1,5-bisphosphate + O2 = 2-phosphoglycolate + (2R)-3-phosphoglycerate + 2 H(+). Its function is as follows. RuBisCO catalyzes two reactions: the carboxylation of D-ribulose 1,5-bisphosphate, the primary event in carbon dioxide fixation, as well as the oxidative fragmentation of the pentose substrate. Both reactions occur simultaneously and in competition at the same active site. In Albidiferax ferrireducens (strain ATCC BAA-621 / DSM 15236 / T118) (Rhodoferax ferrireducens), this protein is Ribulose bisphosphate carboxylase.